Reading from the N-terminus, the 142-residue chain is MAKKVTGYIKLQIPAAKATPAPPVGPALGQHGVNIVQFTKEFNARTANQEGMIIPVVITVYADRSFSFITKTPPAAVLLKKACNLKSGSAAPNKTKVATIKKSEVQKIAELKMPDLNAANVETAISMISGTARSMGITVVED.

Belongs to the universal ribosomal protein uL11 family. In terms of assembly, part of the ribosomal stalk of the 50S ribosomal subunit. Interacts with L10 and the large rRNA to form the base of the stalk. L10 forms an elongated spine to which L12 dimers bind in a sequential fashion forming a multimeric L10(L12)X complex. Post-translationally, one or more lysine residues are methylated.

Its function is as follows. Forms part of the ribosomal stalk which helps the ribosome interact with GTP-bound translation factors. In Lachnoclostridium phytofermentans (strain ATCC 700394 / DSM 18823 / ISDg) (Clostridium phytofermentans), this protein is Large ribosomal subunit protein uL11.